Reading from the N-terminus, the 295-residue chain is Protease HtpX homolog (295 aa).

A run of 2 helical transmembrane segments spans residues 6–26 and 40–60; these read IGLFLLTNILVVVTISIVTSV and LSSLLVFCFLWGMGGAFVSLL. His148 is a Zn(2+) binding site. Glu149 is an active-site residue. Zn(2+) is bound at residue His152. 2 consecutive transmembrane segments (helical) span residues 163 to 183 and 198 to 218; these read LIQGVVNAFVMFFSRIISYAL and IANIVLSILFSILGSIIVAYF. Glu223 is a Zn(2+) binding site.

It belongs to the peptidase M48B family. The cofactor is Zn(2+).

The protein resides in the cell inner membrane. The chain is Protease HtpX homolog from Leptospira interrogans serogroup Icterohaemorrhagiae serovar copenhageni (strain Fiocruz L1-130).